A 231-amino-acid chain; its full sequence is NADH-ubiquinone oxidoreductase chain 4 (231 aa).

Helical transmembrane passes span 1 to 21, 34 to 54, 63 to 85, 89 to 111, 128 to 148, and 156 to 176; these read PIAG…YGII, MFLP…LTCL, IAYS…TPWG, AMAL…NTTY, ILPM…ATPP, and LLIM…LGLS.

The protein belongs to the complex I subunit 4 family.

The protein localises to the mitochondrion membrane. It catalyses the reaction a ubiquinone + NADH + 5 H(+)(in) = a ubiquinol + NAD(+) + 4 H(+)(out). Core subunit of the mitochondrial membrane respiratory chain NADH dehydrogenase (Complex I) that is believed to belong to the minimal assembly required for catalysis. Complex I functions in the transfer of electrons from NADH to the respiratory chain. The immediate electron acceptor for the enzyme is believed to be ubiquinone. The protein is NADH-ubiquinone oxidoreductase chain 4 (MT-ND4) of Bothriechis lateralis (Side-striped palm pitviper).